We begin with the raw amino-acid sequence, 209 residues long: Peroxynitrite isomerase 2 (209 aa).

The short motif at 56 to 62 (GVWRGEG) is the GXWXGXG element. Residues lysine 172 and histidine 199 each contribute to the heme b site.

This sequence belongs to the nitrobindin family. Homodimer. Requires heme b as cofactor.

It carries out the reaction peroxynitrite = nitrate. Its pathway is nitrogen metabolism. Heme-binding protein able to scavenge peroxynitrite and to protect free L-tyrosine against peroxynitrite-mediated nitration, by acting as a peroxynitrite isomerase that converts peroxynitrite to nitrate. Therefore, this protein likely plays a role in peroxynitrite sensing and in the detoxification of reactive nitrogen and oxygen species (RNS and ROS, respectively). Is able to bind nitric oxide (NO) in vitro, but may act as a sensor of peroxynitrite levels in vivo. This is Peroxynitrite isomerase 2 from Mycolicibacterium vanbaalenii (strain DSM 7251 / JCM 13017 / BCRC 16820 / KCTC 9966 / NRRL B-24157 / PYR-1) (Mycobacterium vanbaalenii).